Consider the following 622-residue polypeptide: Histone-lysine N-methyltransferase set9 (622 aa).

Residues 120-234 enclose the SET domain; it reads SPFEITTTNR…IGEEITVSYG (115 aa). 4 disordered regions span residues 262 to 314, 335 to 394, 427 to 470, and 576 to 622; these read VPSE…GKFV, QPAG…TTAT, PTTS…RGKP, and DRGV…RMTM. A compositionally biased stretch (polar residues) spans 265-285; it reads EPQSKASTPALNDDTLSTDSH. Residues 376–394 show a composition bias toward low complexity; the sequence is PPSTAANESERSSTSTTAT. 2 stretches are compositionally biased toward polar residues: residues 427-437 and 446-458; these read PTTSLRSGSTE and DQPSTLKQGSIGS. Residues 590–607 are compositionally biased toward basic and acidic residues; sequence SEPRTETEGSEGCEDRRT. Residues 608–622 are compositionally biased toward basic residues; that stretch reads TRASRRRTRSLRMTM.

Belongs to the class V-like SAM-binding methyltransferase superfamily. Histone-lysine methyltransferase family. Suvar4-20 subfamily.

The protein localises to the nucleus. It localises to the chromosome. It catalyses the reaction L-lysyl(20)-[histone H4] + 3 S-adenosyl-L-methionine = N(6),N(6),N(6)-trimethyl-L-lysyl(20)-[histone H4] + 3 S-adenosyl-L-homocysteine + 3 H(+). In terms of biological role, histone methyltransferase that trimethylates 'Lys-20' of histone H4 to form H4K20me3. The chain is Histone-lysine N-methyltransferase set9 (set9) from Aspergillus fumigatus (strain ATCC MYA-4609 / CBS 101355 / FGSC A1100 / Af293) (Neosartorya fumigata).